We begin with the raw amino-acid sequence, 210 residues long: Probable GTP-binding protein EngB (210 aa).

Residues 25-199 (TGIEVAFAGR…RQKLDTWFSE (175 aa)) enclose the EngB-type G domain. Residues 33–40 (GRSNAGKS), 60–64 (GRTQL), 78–81 (DLPG), 145–148 (TKAD), and 178–180 (FSS) each bind GTP. The Mg(2+) site is built by Ser-40 and Thr-62.

Belongs to the TRAFAC class TrmE-Era-EngA-EngB-Septin-like GTPase superfamily. EngB GTPase family. The cofactor is Mg(2+).

In terms of biological role, necessary for normal cell division and for the maintenance of normal septation. This Shigella flexneri protein is Probable GTP-binding protein EngB.